The following is a 235-amino-acid chain: Phosphoribosylaminoimidazole-succinocarboxamide synthase (235 aa).

This sequence belongs to the SAICAR synthetase family.

The enzyme catalyses 5-amino-1-(5-phospho-D-ribosyl)imidazole-4-carboxylate + L-aspartate + ATP = (2S)-2-[5-amino-1-(5-phospho-beta-D-ribosyl)imidazole-4-carboxamido]succinate + ADP + phosphate + 2 H(+). It participates in purine metabolism; IMP biosynthesis via de novo pathway; 5-amino-1-(5-phospho-D-ribosyl)imidazole-4-carboxamide from 5-amino-1-(5-phospho-D-ribosyl)imidazole-4-carboxylate: step 1/2. This chain is Phosphoribosylaminoimidazole-succinocarboxamide synthase, found in Streptococcus mutans serotype c (strain ATCC 700610 / UA159).